The primary structure comprises 102 residues: Putative septation protein SpoVG (102 aa).

A disordered region spans residues 83–102 (TDEVIPDKNATSDNEESDEA).

The protein belongs to the SpoVG family.

Its function is as follows. Could be involved in septation. The polypeptide is Putative septation protein SpoVG (Staphylococcus epidermidis (strain ATCC 35984 / DSM 28319 / BCRC 17069 / CCUG 31568 / BM 3577 / RP62A)).